Reading from the N-terminus, the 72-residue chain is Putative D-serine transporter DsdX-like protein (72 aa).

This is Putative D-serine transporter DsdX-like protein (dsdX) from Escherichia coli O157:H7.